The following is a 124-amino-acid chain: U13-hexatoxin-Mg1a (124 aa).

The N-terminal stretch at 1–17 (MKLSALVFVASVMLVAA) is a signal peptide. A propeptide spanning residues 18 to 52 (SPVKDVEEPVETHLAADLKTIEELAKYEEAAVQKR) is cleaved from the precursor. Cystine bridges form between Cys54–Cys72, Cys65–Cys78, Cys69–Cys116, and Cys71–Cys87.

In terms of tissue distribution, expressed by the venom gland.

The protein localises to the secreted. No toxicity is observed upon intracranial injection into mice and intrathorax injection into crickets. The chain is U13-hexatoxin-Mg1a from Macrothele gigas (Japanese funnel web spider).